Consider the following 184-residue polypeptide: Fe/S biogenesis protein NfuA (184 aa).

Positions 142 and 145 each coordinate [4Fe-4S] cluster.

It belongs to the NfuA family. Homodimer. It depends on [4Fe-4S] cluster as a cofactor.

Functionally, involved in iron-sulfur cluster biogenesis. Binds a 4Fe-4S cluster, can transfer this cluster to apoproteins, and thereby intervenes in the maturation of Fe/S proteins. Could also act as a scaffold/chaperone for damaged Fe/S proteins. The sequence is that of Fe/S biogenesis protein NfuA from Wigglesworthia glossinidia brevipalpis.